Consider the following 101-residue polypeptide: MIPGELLAEPGELELNAGRPTITLVVANTGDRPIQVGSHYHFYETNAGLSFDREAARGFRLDIAAGTAVRFEPGQTRTVQLVALAGDRKVYGFRGLVQGAL.

This sequence belongs to the urease beta subunit family. In terms of assembly, heterotrimer of UreA (gamma), UreB (beta) and UreC (alpha) subunits. Three heterotrimers associate to form the active enzyme.

The protein localises to the cytoplasm. The catalysed reaction is urea + 2 H2O + H(+) = hydrogencarbonate + 2 NH4(+). It participates in nitrogen metabolism; urea degradation; CO(2) and NH(3) from urea (urease route): step 1/1. The polypeptide is Urease subunit beta (Dechloromonas aromatica (strain RCB)).